The sequence spans 78 residues: 4-methyl-3-hydroxyanthranilic acid carrier protein (78 aa).

Position 33 is an O-(pantetheine 4'-phosphoryl)serine (Ser-33).

Belongs to the acyl carrier protein (ACP) family. 4'-phosphopantetheine is transferred from CoA to a specific serine of the apo-form of this carrier protein.

Its pathway is antibiotic biosynthesis. Functionally, involved in the biosynthesis of actinomycin. Acts as a carrier in the transfer and thioesterification of 4-methyl-3-hydroxyanthranilic acid (4-MHA). The protein is 4-methyl-3-hydroxyanthranilic acid carrier protein of Streptomyces anulatus (Streptomyces chrysomallus).